A 196-amino-acid polypeptide reads, in one-letter code: Small ribosomal subunit protein uS4c (196 aa).

The segment at A17–S38 is disordered. Positions K24–S38 are enriched in basic residues. The region spanning M89–L169 is the S4 RNA-binding domain.

The protein belongs to the universal ribosomal protein uS4 family. As to quaternary structure, part of the 30S ribosomal subunit. Contacts protein S5. The interaction surface between S4 and S5 is involved in control of translational fidelity.

It localises to the plastid. Its subcellular location is the chloroplast. Functionally, one of the primary rRNA binding proteins, it binds directly to 16S rRNA where it nucleates assembly of the body of the 30S subunit. With S5 and S12 plays an important role in translational accuracy. The sequence is that of Small ribosomal subunit protein uS4c (rps4) from Lygeum spartum.